A 367-amino-acid polypeptide reads, in one-letter code: MQTLKVELGERSYPIHIGEGLLDQPELLTPHIVGRQVAIVSNTTVAPLYLERLTQTLAGYNVLPIVLPDGEAFKNWETLQTIFDGLLTARHDRRTTVIALGGGVIGDMAGFAAACYQRGVNFIQIPTTLLSQVDSSVGGKTGINHPLGKNMVGAFYQPSVVLIDTTSLNTLPERELSAGLAEVIKYGLICDEPFLTWLEEHVDALRGLDQAALTVAIERSCAAKALVVGADERESGVRATLNLGHTFGHAIETHMGYGVWLHGEAVAAGTVMALEMSSRLGWISTQDRDRGIRLFQRAGLPVVPPQDMTEDNFLEHMAIDKKVIDGRLRLVLLRQMGEAVITDDYPKEVLQATLVADYRALVDQLRG.

NAD(+)-binding positions include 69–74, 103–107, 127–128, Lys140, and Lys149; these read DGEAFK, GVIGD, and TT. Zn(2+)-binding residues include Glu182, His245, and His262.

The protein belongs to the sugar phosphate cyclases superfamily. Dehydroquinate synthase family. Co(2+) serves as cofactor. Requires Zn(2+) as cofactor. It depends on NAD(+) as a cofactor.

It localises to the cytoplasm. It catalyses the reaction 7-phospho-2-dehydro-3-deoxy-D-arabino-heptonate = 3-dehydroquinate + phosphate. Its pathway is metabolic intermediate biosynthesis; chorismate biosynthesis; chorismate from D-erythrose 4-phosphate and phosphoenolpyruvate: step 2/7. Catalyzes the conversion of 3-deoxy-D-arabino-heptulosonate 7-phosphate (DAHP) to dehydroquinate (DHQ). The chain is 3-dehydroquinate synthase from Pseudomonas savastanoi pv. phaseolicola (strain 1448A / Race 6) (Pseudomonas syringae pv. phaseolicola (strain 1448A / Race 6)).